The following is a 154-amino-acid chain: Aspartate carbamoyltransferase regulatory chain (154 aa).

The Zn(2+) site is built by Cys-111, Cys-116, Cys-139, and Cys-142.

It belongs to the PyrI family. In terms of assembly, contains catalytic and regulatory chains. Zn(2+) serves as cofactor.

Its function is as follows. Involved in allosteric regulation of aspartate carbamoyltransferase. The sequence is that of Aspartate carbamoyltransferase regulatory chain from Parabacteroides distasonis (strain ATCC 8503 / DSM 20701 / CIP 104284 / JCM 5825 / NCTC 11152).